The following is a 163-amino-acid chain: Shikimate kinase (163 aa).

Residue 10-15 (GVGKTT) participates in ATP binding. T14 contributes to the Mg(2+) binding site. Residues D28, R52, and G75 each coordinate substrate. R116 lines the ATP pocket. R134 contacts substrate. R151 provides a ligand contact to ATP.

It belongs to the shikimate kinase family. Monomer. The cofactor is Mg(2+).

The protein localises to the cytoplasm. It catalyses the reaction shikimate + ATP = 3-phosphoshikimate + ADP + H(+). Its pathway is metabolic intermediate biosynthesis; chorismate biosynthesis; chorismate from D-erythrose 4-phosphate and phosphoenolpyruvate: step 5/7. Functionally, catalyzes the specific phosphorylation of the 3-hydroxyl group of shikimic acid using ATP as a cosubstrate. In Streptococcus pyogenes serotype M4 (strain MGAS10750), this protein is Shikimate kinase.